The following is a 256-amino-acid chain: MAEHPDLPPLRIADREFGSRLIMGTGGAENLAVLEEALVASGTELTTVAMRRVDAAGGTGVLDLLKRLEITPLPNTAGCRTAAEAVLTAQLAAEALDTTWVKLEVVADERTLLPDPIELLSAAEQLVDAGFTVLPYTNDDPVLARRLEDAGCAAVMPLGAPIGTGLGIGNPHNIEMIVAAAGVPVILDAGIGTASDAALAMELGCSAVLLATAVTRAKRPPLMAAAMADAVRAGLLAREAGRIPKRFWAQASSPQR.

The Schiff-base intermediate with DXP role is filled by Lys102. Residues Gly163, 189-190, and 211-212 contribute to the 1-deoxy-D-xylulose 5-phosphate site; these read AG and AT.

The protein belongs to the ThiG family. As to quaternary structure, homotetramer. Forms heterodimers with either ThiH or ThiS.

Its subcellular location is the cytoplasm. It carries out the reaction [ThiS sulfur-carrier protein]-C-terminal-Gly-aminoethanethioate + 2-iminoacetate + 1-deoxy-D-xylulose 5-phosphate = [ThiS sulfur-carrier protein]-C-terminal Gly-Gly + 2-[(2R,5Z)-2-carboxy-4-methylthiazol-5(2H)-ylidene]ethyl phosphate + 2 H2O + H(+). It functions in the pathway cofactor biosynthesis; thiamine diphosphate biosynthesis. Functionally, catalyzes the rearrangement of 1-deoxy-D-xylulose 5-phosphate (DXP) to produce the thiazole phosphate moiety of thiamine. Sulfur is provided by the thiocarboxylate moiety of the carrier protein ThiS. In vitro, sulfur can be provided by H(2)S. The polypeptide is Thiazole synthase (Nocardia farcinica (strain IFM 10152)).